The chain runs to 1233 residues: Reverse gyrase 2 (1233 aa).

The RG N-terminal-type zinc-finger motif lies at 1–41 (MNTIPSSNYLSSCPNCGRVISAERLYKGSVCSECLEEDREF). Cys-13, Cys-16, Cys-31, and Cys-34 together coordinate Zn(2+). ATP is bound by residues Gln-89 and 106–113 (APPGLGKT). Positions 93 to 296 (IIRVLRKESF…ALMGFRPGSS (204 aa)) constitute a Helicase ATP-binding domain. The DEAD box signature appears at 212-215 (DDVD). The tract at residues 606–1233 (QKVKTVLFIV…DIYYEIKSIR (628 aa)) is topoisomerase I. The Toprim domain occupies 610-774 (TVLFIVESPN…NIKRAEFHEV (165 aa)). Glu-616 provides a ligand contact to Mg(2+). An RG C-terminal-type; atypical zinc finger spans residues 691–720 (IKKCINGHQFTDFEQGNQCPKCHTTQIILD). The Zn(2+) site is built by Cys-694, His-698, Cys-709, and Cys-712. Asp-743 is a Mg(2+) binding site. The Topo IA-type catalytic domain occupies 790–1233 (NVNLVKSQIV…DIYYEIKSIR (444 aa)). The O-(5'-phospho-DNA)-tyrosine intermediate role is filled by Tyr-947.

The protein in the N-terminal section; belongs to the DEAD box helicase family. DDVD subfamily. In the C-terminal section; belongs to the type IA topoisomerase family. Monomer. Requires Zn(2+) as cofactor. The cofactor is Mg(2+).

Its subcellular location is the cytoplasm. The catalysed reaction is ATP + H2O = ADP + phosphate + H(+). Modifies the topological state of DNA by introducing positive supercoils in an ATP-dependent process, increasing the linking number in steps of +1. Binds to single-stranded DNA, transiently cleaves and then rejoins the ends, introducing a positive supercoil in the process. The scissile phosphodiester is attacked by the catalytic tyrosine of the enzyme, resulting in the formation of a DNA-(5'-phosphotyrosyl)-enzyme intermediate. Probably involved in rewinding DNA strands in regions of the chromosome that have opened up to allow replication, transcription, DNA repair and/or for DNA protection. In Sulfurisphaera tokodaii (strain DSM 16993 / JCM 10545 / NBRC 100140 / 7) (Sulfolobus tokodaii), this protein is Reverse gyrase 2.